The sequence spans 108 residues: UPF0060 membrane protein SA2130 (108 aa).

4 helical membrane-spanning segments follow: residues isoleucine 5–tryptophan 25, serine 31–phenylalanine 51, valine 60–aspartate 80, and lysine 86–serine 106.

The protein belongs to the UPF0060 family.

The protein localises to the cell membrane. The sequence is that of UPF0060 membrane protein SA2130 from Staphylococcus aureus (strain N315).